The following is a 91-amino-acid chain: Protein RacC (91 aa).

The protein is Protein RacC (racC) of Escherichia coli (strain K12).